Here is a 1024-residue protein sequence, read N- to C-terminus: Probable alpha-mannosidase At5g13980 (1024 aa).

The first 21 residues, 1 to 21, serve as a signal peptide directing secretion; sequence MDLAKFLCWIVLLLGISLVES. A glycan (N-linked (GlcNAc...) asparagine) is linked at asparagine 27. Histidine 46 and aspartate 48 together coordinate Zn(2+). A glycan (N-linked (GlcNAc...) asparagine) is linked at asparagine 63. Aspartate 168 provides a ligand contact to Zn(2+). A glycan (N-linked (GlcNAc...) asparagine) is linked at asparagine 278. Residue histidine 410 participates in Zn(2+) binding. An intrachain disulfide couples cysteine 461 to cysteine 469. N-linked (GlcNAc...) asparagine glycosylation is found at asparagine 465, asparagine 475, asparagine 637, asparagine 658, asparagine 733, and asparagine 823. Cysteine 827 and cysteine 832 are oxidised to a cystine.

The protein belongs to the glycosyl hydrolase 38 family. In terms of assembly, homodimer. The cofactor is Zn(2+).

It catalyses the reaction Hydrolysis of terminal, non-reducing alpha-D-mannose residues in alpha-D-mannosides.. Functionally, liberates mannose from p-nitrophenyl-alpha-D-mannoside in vitro. In Arabidopsis thaliana (Mouse-ear cress), this protein is Probable alpha-mannosidase At5g13980.